Reading from the N-terminus, the 428-residue chain is Adenylosuccinate synthetase (428 aa).

Residues 12 to 18 (GDEGKGK) and 40 to 42 (GHT) contribute to the GTP site. D13 serves as the catalytic Proton acceptor. Residues D13 and G40 each coordinate Mg(2+). IMP contacts are provided by residues 13–16 (DEGK), 38–41 (NAGH), T130, R144, Q225, T240, and R304. The Proton donor role is filled by H41. 300–306 (VTTGRSR) lines the substrate pocket. Residues R306, 332–334 (KID), and 414–416 (GVG) contribute to the GTP site.

Belongs to the adenylosuccinate synthetase family. Homodimer. It depends on Mg(2+) as a cofactor.

It is found in the cytoplasm. It carries out the reaction IMP + L-aspartate + GTP = N(6)-(1,2-dicarboxyethyl)-AMP + GDP + phosphate + 2 H(+). It participates in purine metabolism; AMP biosynthesis via de novo pathway; AMP from IMP: step 1/2. In terms of biological role, plays an important role in the de novo pathway of purine nucleotide biosynthesis. Catalyzes the first committed step in the biosynthesis of AMP from IMP. The sequence is that of Adenylosuccinate synthetase from Clostridium botulinum (strain Eklund 17B / Type B).